The following is an 819-amino-acid chain: Leucine--tRNA ligase (819 aa).

Residues 42–52 carry the 'HIGH' region motif; it reads PYPSGRLHMGH. The 'KMSKS' region motif lies at 576 to 580; the sequence is KMSKS. Lysine 579 is a binding site for ATP.

The protein belongs to the class-I aminoacyl-tRNA synthetase family.

It is found in the cytoplasm. It carries out the reaction tRNA(Leu) + L-leucine + ATP = L-leucyl-tRNA(Leu) + AMP + diphosphate. This chain is Leucine--tRNA ligase, found in Nitrosococcus oceani (strain ATCC 19707 / BCRC 17464 / JCM 30415 / NCIMB 11848 / C-107).